We begin with the raw amino-acid sequence, 459 residues long: MTDFQYATDQDTIAAQATAPGRGGVGIIRLSGPKSLAIAKQIIGFEPKPRYAHYVPFKTTGQEQLDEGIALYFPGPNSFTGEDVFELQGHGGPVIMDMLLSHCVALGARLARPGEFSERAFMNDKMDLTQAEAIADLIDSTSEQAAKCALRSLQGAFSKRVDELVEALIHLRIYVEAAIDFPEEEIDFIGDGKVAAELAGIQAKLAEVLKEANQGALIREGMNVVIAGRPNAGKSSLLNALSGKESAIVTNIEGTTRDVLREHIHLDGMPLHIIDTAGLRDSPDEVERIGIQRAWDEISKADRILMMVDSQSIDSKDPNEIWPEFMEKLGDTKHLTLVRNKVDLTKEGTGIETVSGVPVVSLSAKTGEGVTDLTEHLKAVMGFDSTTEGGFIARRRHIEALNKANRFLDAGNEQLHGYGAGELLAEDLKEAQQALSEITGAFTSDDLLGRIFGSFCIGK.

The (6S)-5-formyl-5,6,7,8-tetrahydrofolate site is built by Arg29, Glu86, and Lys125. A TrmE-type G domain is found at 221–382; it reads GMNVVIAGRP…LTEHLKAVMG (162 aa). Asn231 is a K(+) binding site. Residues 231–236, 250–256, and 275–278 each bind GTP; these read NAGKSS, TNIEGTT, and DTAG. Position 235 (Ser235) interacts with Mg(2+). The K(+) site is built by Thr250, Ile252, and Thr255. Position 256 (Thr256) interacts with Mg(2+). Lys459 contacts (6S)-5-formyl-5,6,7,8-tetrahydrofolate.

Belongs to the TRAFAC class TrmE-Era-EngA-EngB-Septin-like GTPase superfamily. TrmE GTPase family. As to quaternary structure, homodimer. Heterotetramer of two MnmE and two MnmG subunits. K(+) serves as cofactor.

The protein localises to the cytoplasm. In terms of biological role, exhibits a very high intrinsic GTPase hydrolysis rate. Involved in the addition of a carboxymethylaminomethyl (cmnm) group at the wobble position (U34) of certain tRNAs, forming tRNA-cmnm(5)s(2)U34. The sequence is that of tRNA modification GTPase MnmE from Marinomonas sp. (strain MWYL1).